Here is a 301-residue protein sequence, read N- to C-terminus: MKIGILSRNQSLYSTSRLIEAAESRGHEVKVIDALRCYMNINSEKPQIHFKGEELVDYDAIIPRIGASVTFYGTAVLRQFEMMGVYPVNESVAITRSRDKLRSMQLLSRKGIGMPITGFASKPDDVKDLLDMVGGAPVVIKLLEGTQGIGVVLAETRKAAESVVEAFMGLKANIMVQEFIKEAGGADIRCFVIGGKVIAAMKRQGAEGEFRSNLHRGGSASLVKLTPEERKTAVAAANIMGLNVAGVDLLRSERGPLVMEVNSSPGLEGIEKATGKDVAGLIIDFIEKTAATKRTKTRGKG.

An ATP-grasp domain is found at 104–287 (MQLLSRKGIG…VAGLIIDFIE (184 aa)). ATP-binding positions include lysine 141, 178–179 (EF), aspartate 187, and 211–213 (RSN). The Mg(2+) site is built by aspartate 248, glutamate 260, and asparagine 262. The Mn(2+) site is built by aspartate 248, glutamate 260, and asparagine 262.

Belongs to the RimK family. Mg(2+) serves as cofactor. Requires Mn(2+) as cofactor.

In Aliivibrio fischeri (strain MJ11) (Vibrio fischeri), this protein is Probable alpha-L-glutamate ligase.